Here is a 635-residue protein sequence, read N- to C-terminus: 1-deoxy-D-xylulose-5-phosphate synthase (635 aa).

Thiamine diphosphate contacts are provided by residues histidine 78 and 119-121 (GHA). Mg(2+) is bound at residue aspartate 150. Residues 151–152 (GS), asparagine 179, phenylalanine 291, and glutamate 376 contribute to the thiamine diphosphate site. Mg(2+) is bound at residue asparagine 179.

The protein belongs to the transketolase family. DXPS subfamily. Homodimer. Requires Mg(2+) as cofactor. It depends on thiamine diphosphate as a cofactor.

It carries out the reaction D-glyceraldehyde 3-phosphate + pyruvate + H(+) = 1-deoxy-D-xylulose 5-phosphate + CO2. It functions in the pathway metabolic intermediate biosynthesis; 1-deoxy-D-xylulose 5-phosphate biosynthesis; 1-deoxy-D-xylulose 5-phosphate from D-glyceraldehyde 3-phosphate and pyruvate: step 1/1. In terms of biological role, catalyzes the acyloin condensation reaction between C atoms 2 and 3 of pyruvate and glyceraldehyde 3-phosphate to yield 1-deoxy-D-xylulose-5-phosphate (DXP). In Chlorobaculum tepidum (strain ATCC 49652 / DSM 12025 / NBRC 103806 / TLS) (Chlorobium tepidum), this protein is 1-deoxy-D-xylulose-5-phosphate synthase.